The primary structure comprises 188 residues: C-type lectin domain family 5 member A (188 aa).

The Cytoplasmic segment spans residues 1-4 (MNWH). The chain crosses the membrane as a helical; Signal-anchor for type II membrane protein span at residues 5 to 27 (MIISGLIVVVLKVVGMTLFLLYF). At 28–188 (PQIFNKSNDG…YRRICEKNAK (161 aa)) the chain is on the extracellular side. Asparagine 32 carries N-linked (GlcNAc...) asparagine glycosylation. Cysteine 71 and cysteine 82 are disulfide-bonded. The C-type lectin domain maps to 78–184 (YQARCFFLST…CDISYRRICE (107 aa)). N-linked (GlcNAc...) asparagine glycosylation is found at asparagine 93, asparagine 144, and asparagine 151. Intrachain disulfides connect cysteine 99–cysteine 183 and cysteine 161–cysteine 175.

Monomer. Homodimer. The majority of CLEC5A is expressed as a monomeric form on macrophages. Interacts with TYROBP/DAP12. The interaction with TYROBP is required for CLEC5A cell surface expression. Interacts with HCST/DAP10. Forms a CLEC5A/TYROBP/HCST trimolecular complex depending almost solely on TYROBP. As to quaternary structure, (Microbial infection) Interacts with dengue virus envelope protein E. In terms of processing, N-glycosylated. Contains sialic acid residues. As to expression, highly expressed in bone marrow with lower levels in synovium, lung and bronchus. Expressed in peripheral blood monocytes and in the monocyte/macrophage cell lines U-937 and Mono-Mac-6, but not in cell lines of other origins. Expression is down-regulated when monocytes differentiate into dendritic cells.

The protein resides in the cell membrane. Functions as a positive regulator of osteoclastogenesis. Cell surface receptor that signals via TYROBP. Regulates inflammatory responses. Functionally, (Microbial infection) Critical macrophage receptor for dengue virus serotypes 1-4. The binding of dengue virus to CLEC5A triggers signaling through the phosphorylation of TYROBP. This interaction does not result in viral entry, but stimulates pro-inflammatory cytokine release. The protein is C-type lectin domain family 5 member A (CLEC5A) of Homo sapiens (Human).